The chain runs to 576 residues: Interleukin-1 receptor type 1 (576 aa).

Positions 1-19 (MENMKVLLGLICLMVPLLS) are cleaved as a signal peptide. Topologically, residues 20–338 (LEIDVCTEYP…QLIYPVPDFK (319 aa)) are extracellular. Disulfide bonds link cysteine 25/cysteine 107, cysteine 46/cysteine 99, and cysteine 145/cysteine 199. Ig-like C2-type domains are found at residues 25-115 (CTEY…VTVT), 121-213 (PGLC…YPVT), and 229-329 (PVIL…AHVQ). Residues asparagine 63, asparagine 103, asparagine 174, asparagine 236, asparagine 252, asparagine 266, and asparagine 300 are each glycosylated (N-linked (GlcNAc...) asparagine). Cysteines 251 and 315 form a disulfide. A helical membrane pass occupies residues 339 to 359 (NYLIGGFIILTATIVCCVCIY). Over 360 to 576 (KVFKVDIVLW…LPAATHLPLG (217 aa)) the chain is Cytoplasmic. The 156-residue stretch at 386–541 (KTYDAYILYP…RFWKNLRYQM (156 aa)) folds into the TIR domain. Glutamate 473 is an active-site residue. At tyrosine 499 the chain carries Phosphotyrosine. Phosphothreonine; by PKC is present on threonine 556.

This sequence belongs to the interleukin-1 receptor family. As to quaternary structure, the interleukin-1 receptor complex is a heterodimer of IL1R1 and IL1RAP. Interacts with PIK3R1. Interacts with IL1A. A soluble form (sIL1R1) is probably produced by proteolytic cleavage at the cell surface (shedding). Post-translationally, rapidly phosphorylated on Tyr-499 in response to IL-1, which creates a SH2 binding site for the PI 3-kinase regulatory subunit PIK3R1. In terms of tissue distribution, isoform 2 is expressed in various brain tissues.

It localises to the membrane. The protein resides in the cell membrane. It is found in the secreted. The enzyme catalyses NAD(+) + H2O = ADP-D-ribose + nicotinamide + H(+). In terms of biological role, receptor for IL1A, IL1B and IL1RN. After binding to interleukin-1 associates with the coreceptor IL1RAP to form the high affinity interleukin-1 receptor complex which mediates interleukin-1-dependent activation of NF-kappa-B, MAPK and other pathways. Signaling involves the recruitment of adapter molecules such as TOLLIP, MYD88, and IRAK1 or IRAK2 via the respective TIR domains of the receptor/coreceptor subunits. Binds ligands with comparable affinity and binding of antagonist IL1RN prevents association with IL1RAP to form a signaling complex. Involved in IL1B-mediated costimulation of IFNG production from T-helper 1 (Th1) cells. Functionally, unable to mediate canonical IL-1 signaling. Cooperates with IL1RAP isoform 3 to mediate IL1B-induced neuronal activity including IL1B-potentiated NMDA-induced calcium influx mediated by Akt kinase activation. This Mus musculus (Mouse) protein is Interleukin-1 receptor type 1 (Il1r1).